We begin with the raw amino-acid sequence, 189 residues long: Autophagy receptor ATG45 (189 aa).

The binds glycogen stretch occupies residues 1 to 96 (MSNFLLVIPE…TNNILHFKDN (96 aa)). The required for sequestration into autophagosomes stretch occupies residues 97–189 (EASQLMDIPL…AKKVKTYWNK (93 aa)). Serine 107 is modified (phosphoserine). The short motif at 127-130 (YVNL) is the ATG8 interaction motif (AIM) element. The residue at position 172 (serine 172) is a Phosphoserine. The tract at residues 176–187 (LMCIAKKVKTYW) is may facilitate interactions with the autophagosome membrane.

As to quaternary structure, interacts with ATG8.

It is found in the cytoplasm. It localises to the cytosol. The protein localises to the cytoplasmic vesicle. The protein resides in the autophagosome. Autophagy receptor for glycogen that facilitates the sequestration of glycogen assemblies into autophagosomes as part of bulk autophagy; the autophagy of glycogen (glycophagy) is stimulated during prolonged nitrogen starvation and during sporulation. The chain is Autophagy receptor ATG45 from Saccharomyces cerevisiae (strain ATCC 204508 / S288c) (Baker's yeast).